Here is a 118-residue protein sequence, read N- to C-terminus: Large ribosomal subunit protein bL20 (118 aa).

Belongs to the bacterial ribosomal protein bL20 family.

Binds directly to 23S ribosomal RNA and is necessary for the in vitro assembly process of the 50S ribosomal subunit. It is not involved in the protein synthesizing functions of that subunit. The chain is Large ribosomal subunit protein bL20 from Oceanobacillus iheyensis (strain DSM 14371 / CIP 107618 / JCM 11309 / KCTC 3954 / HTE831).